A 274-amino-acid chain; its full sequence is MITFPNAKINLGLNITEKRPDGYHNLETVFYPIPLEDALEITILNDSKQKFVLHQSGLEISGEPETNLVVKAYLLLEQEFQLPPVDIYLYKHIPSGAGLGGGSADAAFMLKLLNEKFNLHLADEKLEEYAAILGADCAFFIKNKPTFAEGIGNIFSPVDLSLKGYQLVLVKPDVFVSTRDAFSQIQPHYPDHSLKEIIRRPVSEWKNCMFNDFEKSVFPQYPVIEEIKKELYSKGAIYAAMSGSGSSVFGLFSPEEKITKMDFEAAFCFQTELK.

Residue lysine 8 is part of the active site. ATP is bound at residue 94-104 (PSGAGLGGGSA). Aspartate 136 is an active-site residue.

This sequence belongs to the GHMP kinase family. IspE subfamily.

It carries out the reaction 4-CDP-2-C-methyl-D-erythritol + ATP = 4-CDP-2-C-methyl-D-erythritol 2-phosphate + ADP + H(+). It participates in isoprenoid biosynthesis; isopentenyl diphosphate biosynthesis via DXP pathway; isopentenyl diphosphate from 1-deoxy-D-xylulose 5-phosphate: step 3/6. Catalyzes the phosphorylation of the position 2 hydroxy group of 4-diphosphocytidyl-2C-methyl-D-erythritol. This is 4-diphosphocytidyl-2-C-methyl-D-erythritol kinase from Bacteroides fragilis (strain YCH46).